The sequence spans 619 residues: Probable transporter mch1 (619 aa).

The next 12 membrane-spanning stretches (helical) occupy residues 88 to 108 (VISC…PLFL), 120 to 140 (AVSI…GYLC), 147 to 167 (PLAL…AFAY), 184 to 204 (VMVV…LAAV), 219 to 239 (IMLA…SQVA), 261 to 281 (FLFL…GLRI), 377 to 397 (TMWW…AYIN), 428 to 448 (IIAL…DFFA), 480 to 500 (LAFL…LSSP), 515 to 535 (LIGL…SVVW), 541 to 561 (GTNW…WGVI), and 589 to 609 (FWAV…ILAW).

The protein belongs to the major facilitator superfamily.

It is found in the vacuole membrane. Probable transporter. The chain is Probable transporter mch1 (mch1) from Aspergillus fumigatus (strain ATCC MYA-4609 / CBS 101355 / FGSC A1100 / Af293) (Neosartorya fumigata).